The chain runs to 355 residues: MAQRKKLLVMAGGTGGHVFPAIAVAQYLQKQGWDICWLGTKDRMEAQLVPKHGIPIEFIQISGLRGKGIKALLGAPFAICRAIMQARKIILRQKPDAVLGMGGYVSGPGGVAAKLCGVPVILHEQNAVAGLTNVWLSKIAKRVLQAFPTAFPNAEVVGNPVRQDLFSMPDPEQRFAERTGKLRVLVVGGSQGARVLNLTVPEMAARLTDKLEIRHQVGAGSVEKITALYEEKGALSADVKITEFIDNMAEAYAWADIVICRSGALTVCELAAVGTPAIFVPFRHKDQQQYLNAKYLADVGAAKIVQQAELNADVLVDLLTNLDREQLLAMAIKAKQMSAPFAAQRVAEVIIENAN.

Residues 14–16 (TGG), Asn126, Arg162, Ser190, Ile245, 264–269 (ALTVCE), and Gln289 contribute to the UDP-N-acetyl-alpha-D-glucosamine site.

Belongs to the glycosyltransferase 28 family. MurG subfamily.

It localises to the cell inner membrane. The enzyme catalyses di-trans,octa-cis-undecaprenyl diphospho-N-acetyl-alpha-D-muramoyl-L-alanyl-D-glutamyl-meso-2,6-diaminopimeloyl-D-alanyl-D-alanine + UDP-N-acetyl-alpha-D-glucosamine = di-trans,octa-cis-undecaprenyl diphospho-[N-acetyl-alpha-D-glucosaminyl-(1-&gt;4)]-N-acetyl-alpha-D-muramoyl-L-alanyl-D-glutamyl-meso-2,6-diaminopimeloyl-D-alanyl-D-alanine + UDP + H(+). The protein operates within cell wall biogenesis; peptidoglycan biosynthesis. Its function is as follows. Cell wall formation. Catalyzes the transfer of a GlcNAc subunit on undecaprenyl-pyrophosphoryl-MurNAc-pentapeptide (lipid intermediate I) to form undecaprenyl-pyrophosphoryl-MurNAc-(pentapeptide)GlcNAc (lipid intermediate II). This Mannheimia succiniciproducens (strain KCTC 0769BP / MBEL55E) protein is UDP-N-acetylglucosamine--N-acetylmuramyl-(pentapeptide) pyrophosphoryl-undecaprenol N-acetylglucosamine transferase.